We begin with the raw amino-acid sequence, 314 residues long: Formylglycine-generating enzyme (314 aa).

The span at 1-20 (MAVAAPSPAAAAEPGPAARP) shows a compositional bias: low complexity. The segment at 1-31 (MAVAAPSPAAAAEPGPAARPRSTRGQVRLPG) is disordered. Ca(2+)-binding residues include Asn194, Ile195, Asp208, and His210. Cu(2+)-binding residues include Cys272 and Cys277.

It belongs to the sulfatase-modifying factor family. Cu(2+) serves as cofactor.

The enzyme catalyses L-cysteinyl-[sulfatase] + 2 a thiol + O2 = an organic disulfide + 3-oxo-L-alanyl-[sulfatase] + hydrogen sulfide + H2O + H(+). The protein operates within protein modification; sulfatase oxidation. Oxidase that catalyzes the conversion of cysteine to 3-oxoalanine on target proteins. 3-oxoalanine modification, which is also named formylglycine (fGly), occurs in the maturation of arylsulfatases and some alkaline phosphatases that use the hydrated form of 3-oxoalanine as a catalytic nucleophile. The chain is Formylglycine-generating enzyme from Streptomyces coelicolor (strain ATCC BAA-471 / A3(2) / M145).